The sequence spans 231 residues: Adenosylcobinamide-GDP ribazoletransferase (231 aa).

5 helical membrane-spanning segments follow: residues 28–48 (LWLF…PHFI), 97–117 (TGAG…TLLY), 121–141 (FWEI…LMLL), 162–182 (VFIG…ESLA), and 209–229 (VIGS…TIAG).

The protein belongs to the CobS family. Mg(2+) is required as a cofactor.

Its subcellular location is the cell membrane. It carries out the reaction alpha-ribazole + adenosylcob(III)inamide-GDP = adenosylcob(III)alamin + GMP + H(+). The catalysed reaction is alpha-ribazole 5'-phosphate + adenosylcob(III)inamide-GDP = adenosylcob(III)alamin 5'-phosphate + GMP + H(+). Its pathway is cofactor biosynthesis; adenosylcobalamin biosynthesis; adenosylcobalamin from cob(II)yrinate a,c-diamide: step 7/7. Joins adenosylcobinamide-GDP and alpha-ribazole to generate adenosylcobalamin (Ado-cobalamin). Also synthesizes adenosylcobalamin 5'-phosphate from adenosylcobinamide-GDP and alpha-ribazole 5'-phosphate. This chain is Adenosylcobinamide-GDP ribazoletransferase (cobS2), found in Archaeoglobus fulgidus (strain ATCC 49558 / DSM 4304 / JCM 9628 / NBRC 100126 / VC-16).